We begin with the raw amino-acid sequence, 862 residues long: MPEKPALEGLEGKWGSRWQEDGTYLFDRAAAIAAGRDAVYSIDTPPPTASGSLHIGHVFSYTHTDVVARFQRMLGKRVFYPMGWDDNGLPTERRVQNYYGVRCDPTLPYEPGLTPPFEGGDNKSSKAADQKPISRRNFIELCERLTVEDEKQFEALWRSLGLSVDWSQTYRTIGEESLRTSQLAFLRNVKRGEAYQALAPTLWDITFRTAVAQAELEDRDQPSAYHRVAFHGEAGPVFIETTRPELLPACVALVAHPDDERYQPLLGTTVRTPVFGVEVPVVAHHLAQPDKGSGIAMICTFGDITDVTWWRELDLPNRAIIGFDGRIVSDAPEAIDTEAGREAYAQLAGKTVFSAKQTVVELLRASGDLVGEPKPIQHPVKFFEKGDKPLEIVSTRQWYVKNGARDEELRERLIELGRGIDWHPDFMRVRYENWVNGLTGDWLISRQRFFGVPIPVWYPLDAGGNPVFDAPILPLEESLPIDPSSAAAPGYTEQQRGQAGGFVGEHDVMDTWMTSSLTPQLAGGWHRDDELFAAVSPYDLRPQGQDIIRTWLFSTLLRSQLEDGVAPWTHAALSGFIVDPDRKKMSKSKGNVVTPADVLERHGSDAVRYWAASSRLGTDAAFDPQNPTQIKIGRRLAIKLLNAAKFILGFDAPASLDLAQVTVPLDRSMLQQLTDVITDATAALDAYDHARALETTETFFWTFCDDYLELVKERAYGEASTGQVSAVVALRMALSAFLRLFAPVLPFAAEEAWRWWNEGSVHLAAWPAAAETSVGGNDARAVLNVLGRALTGIRGAKTAAKASQRTPVDSAVIAGPAGDLAVIESAADDLRSVGRIVELRFTAGADLAVADIVLTQAPEEER.

The 'HIGH' region motif lies at proline 47–histidine 57. Residues glutamate 110–glutamine 130 form a disordered region. Positions glycine 120–aspartate 129 are enriched in basic and acidic residues. The 'KMSKS' region signature appears at lysine 584–serine 588. Lysine 587 lines the ATP pocket.

It belongs to the class-I aminoacyl-tRNA synthetase family. ValS type 2 subfamily. As to quaternary structure, monomer.

The protein localises to the cytoplasm. The enzyme catalyses tRNA(Val) + L-valine + ATP = L-valyl-tRNA(Val) + AMP + diphosphate. In terms of biological role, catalyzes the attachment of valine to tRNA(Val). As ValRS can inadvertently accommodate and process structurally similar amino acids such as threonine, to avoid such errors, it has a 'posttransfer' editing activity that hydrolyzes mischarged Thr-tRNA(Val) in a tRNA-dependent manner. This is Valine--tRNA ligase from Leifsonia xyli subsp. xyli (strain CTCB07).